The following is a 65-amino-acid chain: Putative primary metabolism protein prl65 (65 aa).

Residues 1 to 25 (MTKYSKGNKVEYHPIGGPSGTSTST) form a disordered region.

Functionally, may play a role in primary metabolism. The sequence is that of Putative primary metabolism protein prl65 from Schizosaccharomyces pombe (strain 972 / ATCC 24843) (Fission yeast).